We begin with the raw amino-acid sequence, 868 residues long: DNA mismatch repair protein MutS (868 aa).

ATP is bound at residue 620–627; sequence GPNMSGKS.

Belongs to the DNA mismatch repair MutS family.

Its function is as follows. This protein is involved in the repair of mismatches in DNA. It is possible that it carries out the mismatch recognition step. This protein has a weak ATPase activity. This Flavobacterium johnsoniae (strain ATCC 17061 / DSM 2064 / JCM 8514 / BCRC 14874 / CCUG 350202 / NBRC 14942 / NCIMB 11054 / UW101) (Cytophaga johnsonae) protein is DNA mismatch repair protein MutS.